A 578-amino-acid polypeptide reads, in one-letter code: Rhoptry protein 4 (578 aa).

A signal peptide spans 1–33 (MGHPTSFGQPSCLVWLAAAFLVLGLCLVQQGAG). A disordered region spans residues 56–82 (VDKYSRDSTEGENTVSEGEAEGSRGGS). Residues 259–546 (LVRGRRIGLF…ALQAIETPEY (288 aa)) form the Protein kinase domain. The tract at residues 559-578 (LYSGDGTLTGGDDDMPPLET) is disordered. The span at 569-578 (GDDDMPPLET) shows a compositional bias: acidic residues.

In terms of processing, phosphorylated on multiple serine and threonine residues in parasitic extracts and infected cells but not in extracellular parasites.

It is found in the secreted. The protein resides in the parasitophorous vacuole membrane. Thought to play a role in parasitophorous vacuole membrane function during the infection of host organisms. The polypeptide is Rhoptry protein 4 (Toxoplasma gondii).